Reading from the N-terminus, the 486-residue chain is Ribulose bisphosphate carboxylase large chain (486 aa).

Substrate is bound by residues asparagine 126 and threonine 176. The active-site Proton acceptor is lysine 178. Position 180 (lysine 180) interacts with substrate. 3 residues coordinate Mg(2+): lysine 204, aspartate 206, and glutamate 207. An N6-carboxylysine modification is found at lysine 204. Histidine 296 functions as the Proton acceptor in the catalytic mechanism. 3 residues coordinate substrate: arginine 297, histidine 329, and serine 381.

It belongs to the RuBisCO large chain family. Type I subfamily. As to quaternary structure, heterohexadecamer of 8 large chains and 8 small chains. It depends on Mg(2+) as a cofactor.

It carries out the reaction 2 (2R)-3-phosphoglycerate + 2 H(+) = D-ribulose 1,5-bisphosphate + CO2 + H2O. The enzyme catalyses D-ribulose 1,5-bisphosphate + O2 = 2-phosphoglycolate + (2R)-3-phosphoglycerate + 2 H(+). Functionally, ruBisCO catalyzes two reactions: the carboxylation of D-ribulose 1,5-bisphosphate, the primary event in carbon dioxide fixation, as well as the oxidative fragmentation of the pentose substrate. Both reactions occur simultaneously and in competition at the same active site. The sequence is that of Ribulose bisphosphate carboxylase large chain from Cupriavidus taiwanensis (strain DSM 17343 / BCRC 17206 / CCUG 44338 / CIP 107171 / LMG 19424 / R1) (Ralstonia taiwanensis (strain LMG 19424)).